A 263-amino-acid polypeptide reads, in one-letter code: Probable elongation factor 1-beta/1-delta 2 (263 aa).

Serine 2 is modified (N-acetylserine). Residues 112 to 153 form a disordered region; sequence QGQTSSVAAPAAAPAAAKEEAAGDDDFDLFGSEDEEEDEEKK. Residues 133 to 150 are compositionally biased toward acidic residues; it reads AGDDDFDLFGSEDEEEDE.

It belongs to the EF-1-beta/EF-1-delta family. EF-1 is composed of 4 subunits: alpha, beta, delta, and gamma.

Its function is as follows. EF-1-beta and EF-1-delta stimulate the exchange of GDP bound to EF-1-alpha to GTP. The chain is Probable elongation factor 1-beta/1-delta 2 from Caenorhabditis elegans.